A 926-amino-acid chain; its full sequence is Tyrosine-protein phosphatase non-receptor type 4 (926 aa).

One can recognise an FERM domain in the interval 29-312 (VVCNILLLDN…EHHTFFRLDR (284 aa)). Disordered stretches follow at residues 379 to 412 (SDDR…TRVR), 429 to 474 (SEDF…KKNS), and 492 to 511 (NESF…GGIP). 2 stretches are compositionally biased toward polar residues: residues 398–408 (NHRNSSFTQEA) and 432–455 (FVSQ…PSQE). Residue Ser474 is modified to Phosphoserine. Residues 517–589 (LIKMKPDENG…DQVVLFIKAS (73 aa)) enclose the PDZ domain. The Tyrosine-protein phosphatase domain occupies 655 to 911 (VLAQFDQLYR…RFVCEAILKV (257 aa)). Residues Asp820, 852–858 (CSAGIGR), and Gln896 contribute to the substrate site. The active-site Phosphocysteine intermediate is Cys852.

It belongs to the protein-tyrosine phosphatase family. Non-receptor class subfamily. In terms of tissue distribution, highly expressed in testis. Specifically expressed in spermatocytes and spermatids within seminiferous tubules (at protein level).

It localises to the cell membrane. Its subcellular location is the cytoplasm. The protein localises to the cytoskeleton. It catalyses the reaction O-phospho-L-tyrosyl-[protein] + H2O = L-tyrosyl-[protein] + phosphate. In terms of biological role, phosphatase that plays a role in immunity, learning, synaptic plasticity or cell homeostasis. Regulates neuronal cell homeostasis by protecting neurons against apoptosis. Negatively regulates TLR4-induced interferon beta production by dephosphorylating adapter TICAM2 and inhibiting subsequent TRAM-TRIF interaction. Dephosphorylates also the immunoreceptor tyrosine-based activation motifs/ITAMs of the TCR zeta subunit and thereby negatively regulates TCR-mediated signaling pathway. May act at junctions between the membrane and the cytoskeleton. The polypeptide is Tyrosine-protein phosphatase non-receptor type 4 (Ptpn4) (Mus musculus (Mouse)).